A 322-amino-acid chain; its full sequence is uncharacterized protein (322 aa).

The first 32 residues, 1–32, serve as a signal peptide directing secretion; the sequence is MRDGIGKRAASALFLCGVLVMLAVSSAIVSSA.

This is an uncharacterized protein from Bacillus subtilis (strain 168).